The following is a 360-amino-acid chain: Phospho-N-acetylmuramoyl-pentapeptide-transferase (360 aa).

The next 10 membrane-spanning stretches (helical) occupy residues 21-41, 73-93, 94-114, 132-152, 168-188, 199-219, 239-259, 263-283, 288-308, and 338-358; these read YLTFRSVLALLTALLLSLWIG, TMGGLMILATITVSTLLWGDL, SNPYIWFSLFVLLGYGAIGFV, WKYFWLSLVSLIAIFGMYALG, IMPQLGLFYVVLAYFVIVGTS, GLAIMPTVFVAGAFAIIAWAT, LVIFCTAIVGAGLGFLWFNTY, VFMGDVGSLALGGALGTIAVL, FLLVIMGGVFVMETVSVILQV, and VIIRFWIISLMLVLFGLVTLK.

It belongs to the glycosyltransferase 4 family. MraY subfamily. Mg(2+) serves as cofactor.

It localises to the cell inner membrane. The enzyme catalyses UDP-N-acetyl-alpha-D-muramoyl-L-alanyl-gamma-D-glutamyl-meso-2,6-diaminopimeloyl-D-alanyl-D-alanine + di-trans,octa-cis-undecaprenyl phosphate = di-trans,octa-cis-undecaprenyl diphospho-N-acetyl-alpha-D-muramoyl-L-alanyl-D-glutamyl-meso-2,6-diaminopimeloyl-D-alanyl-D-alanine + UMP. The protein operates within cell wall biogenesis; peptidoglycan biosynthesis. Functionally, catalyzes the initial step of the lipid cycle reactions in the biosynthesis of the cell wall peptidoglycan: transfers peptidoglycan precursor phospho-MurNAc-pentapeptide from UDP-MurNAc-pentapeptide onto the lipid carrier undecaprenyl phosphate, yielding undecaprenyl-pyrophosphoryl-MurNAc-pentapeptide, known as lipid I. This chain is Phospho-N-acetylmuramoyl-pentapeptide-transferase, found in Mannheimia succiniciproducens (strain KCTC 0769BP / MBEL55E).